Consider the following 269-residue polypeptide: MVIFTDLDGTLLNHEDYSFKDAIPSLERIKKKGIPLVIVTSKTKKEVELIQKELGIEEPFIVENGAAVFFPKGYRGFNIRCDQENRYCIIKLGRDYREIRDFIEKIKDKFKIKGFGDMTVEEIVRLTDLPYDRAELAKERDFTEPFIIEDEKDIKDLEEIAEKEGFKITKGGRFYHLIGKGQDKGRAVQIVKKVFEENYGEVPLTVGLGDSRNDIPMLREVDIPILIPHINKKYESVNLPGIIKAEYPGSKGWNESIWRILNEIERGCC.

The Nucleophile role is filled by Asp6. Mg(2+)-binding residues include Asp6, Asp8, and Asp210.

It belongs to the HAD-like hydrolase superfamily. MPGP family. As to quaternary structure, monomer. Co(2+) is required as a cofactor. Mg(2+) serves as cofactor.

The enzyme catalyses (2R)-2-O-(alpha-D-glucopyranosyl)-3-phospho-glycerate + H2O = (2R)-2-O-(alpha-D-glucopyranosyl)-glycerate + phosphate. It carries out the reaction 2-O-(alpha-D-mannosyl)-3-phosphoglycerate + H2O = (2R)-2-O-(alpha-D-mannosyl)-glycerate + phosphate. Functionally, involved in the biosynthesis of glucosylglycerate. Catalyzes the dephosphorylation of glucosyl-3-phosphoglycerate (GPG) and mannosyl-3-phosphoglycerate (MPG) to glucosylglycerate (GG) and mannosylglycerate (MG), respectively. The polypeptide is Glucosyl-3-phosphoglycerate/mannosyl-3-phosphoglycerate phosphatase (Persephonella marina (strain DSM 14350 / EX-H1)).